Consider the following 187-residue polypeptide: Protein Flattop (187 aa).

The disordered stretch occupies residues 97–187 (THSGHGIHTH…TPQLEREEPQ (91 aa)). Polar residues predominate over residues 122-131 (EGDQTCNAPT). A compositionally biased stretch (basic and acidic residues) spans 169-187 (KRREQSLEETPQLEREEPQ).

Belongs to the Flattop family.

The protein localises to the cytoplasm. Its subcellular location is the cytoskeleton. The protein resides in the cilium basal body. It localises to the cell projection. It is found in the cilium. The protein localises to the apical cell membrane. Its subcellular location is the cilium axoneme. Its function is as follows. Microtubule inner protein (MIP) part of the dynein-decorated doublet microtubules (DMTs) in cilia axoneme. Acts as a regulator of cilium basal body docking and positioning in mono- and multiciliated cells. Regulates basal body docking and cilia formation in multiciliated lung cells. Regulates kinocilium positioning and stereocilia bundle morphogenesis in the inner ear. This is Protein Flattop from Salmo salar (Atlantic salmon).